The following is a 260-amino-acid chain: Flap endonuclease Xni (260 aa).

Asp-104 provides a ligand contact to Mg(2+). The 5'-3' exonuclease domain occupies Val-160 to Leu-249. Residues Leu-171, Ala-172, Pro-180, Val-182, and Ile-185 each contribute to the K(+) site. Residues Gly-184 to Ser-189 form an interaction with DNA region.

This sequence belongs to the Xni family. Mg(2+) serves as cofactor. It depends on K(+) as a cofactor.

Has flap endonuclease activity. During DNA replication, flap endonucleases cleave the 5'-overhanging flap structure that is generated by displacement synthesis when DNA polymerase encounters the 5'-end of a downstream Okazaki fragment. This chain is Flap endonuclease Xni, found in Pectobacterium carotovorum subsp. carotovorum (strain PC1).